The chain runs to 561 residues: ATP-dependent RNA helicase MRH4, mitochondrial (561 aa).

Residues 1 to 26 (MSLFFKPVISPQWSFPVLLKIGVRSY) constitute a mitochondrion transit peptide. Residues 29 to 72 (GPRTKHKGNSPLASVPTGSSNKNRKQKAKGKKGNKKNDPDQAFN) are disordered. A compositionally biased stretch (basic residues) spans 50 to 62 (KNRKQKAKGKKGN). The short motif at 98–129 (SNFDQLLILPPVRDAVKEIISKESLKLQDSRK) is the Q motif element. Residues 131 to 319 (TSENIIPSPI…NINHLIFCSA (189 aa)) enclose the Helicase ATP-binding domain. 144-151 (AIKRISKN) contacts ATP. Residues 267–270 (SIRM) carry the DEAD box motif. In terms of domain architecture, Helicase C-terminal spans 350-539 (ALDFKVINSA…KQGGRVFMLT (190 aa)).

This sequence belongs to the DEAD box helicase family. MRH4 subfamily.

Its subcellular location is the mitochondrion. It catalyses the reaction ATP + H2O = ADP + phosphate + H(+). Functionally, ATP-binding RNA helicase involved in mitochondrial RNA metabolism. Required for maintenance of mitochondrial DNA. The chain is ATP-dependent RNA helicase MRH4, mitochondrial (MRH4) from Saccharomyces cerevisiae (strain YJM789) (Baker's yeast).